The following is a 448-amino-acid chain: Trigger factor (448 aa).

The PPIase FKBP-type domain maps to 172–257 (GDRVTVDFVG…MKKIEWPHLP (86 aa)).

Belongs to the FKBP-type PPIase family. Tig subfamily.

It is found in the cytoplasm. The enzyme catalyses [protein]-peptidylproline (omega=180) = [protein]-peptidylproline (omega=0). Functionally, involved in protein export. Acts as a chaperone by maintaining the newly synthesized protein in an open conformation. Functions as a peptidyl-prolyl cis-trans isomerase. In Paraburkholderia xenovorans (strain LB400), this protein is Trigger factor.